Reading from the N-terminus, the 69-residue chain is MKEGIHPKYEEATFTCASCSNEIKTRSTAGDLTLGICSECHPFYTGKHKLVDTAGRVERFRRKYGMQDQ.

This sequence belongs to the bacterial ribosomal protein bL31 family. Type A subfamily. As to quaternary structure, part of the 50S ribosomal subunit.

Binds the 23S rRNA. This is Large ribosomal subunit protein bL31 from Magnetococcus marinus (strain ATCC BAA-1437 / JCM 17883 / MC-1).